The following is a 496-amino-acid chain: Gamma-aminobutyric acid receptor subunit beta-like (496 aa).

The or 27 signal peptide spans 1 to 20 (MTCFTRVGVSCGLFFFLLGA). Over 21 to 258 (QLQLIRCIRK…SFKLQRNIGY (238 aa)) the chain is Extracellular. N-linked (GlcNAc...) asparagine glycans are attached at residues Asn-39 and Asn-189. A disulfide bridge connects residues Cys-176 and Cys-190. A run of 3 helical transmembrane segments spans residues 259–280 (FVFQ…SFWI), 285–306 (TSAR…STGV), and 318–342 (AIDI…AVNY). Topologically, residues 343–472 (TYWGKRAKKK…KIKDVNIIDK (130 aa)) are cytoplasmic. A helical membrane pass occupies residues 473 to 494 (YSRMIFPISFLAFNLGYWLFYI).

It belongs to the ligand-gated ion channel (TC 1.A.9) family. Gamma-aminobutyric acid receptor (TC 1.A.9.5) subfamily. In terms of assembly, generally pentameric. There are five types of GABA(A) receptor chains: alpha, beta, gamma, delta, and rho. Interacts with Grd (alpha chain).

It is found in the postsynaptic cell membrane. The protein resides in the cell membrane. GABA, an inhibitory neurotransmitter, mediates neuronal inhibition by binding to the GABA receptor and opening an integral chloride channel. Combines with the ligand-gated ion channel subunit GRD to form cation-selective GABA-gated ion channels when coexpressed in Xenopus laevis oocytes. This Drosophila melanogaster (Fruit fly) protein is Gamma-aminobutyric acid receptor subunit beta-like (Lcch3).